Reading from the N-terminus, the 122-residue chain is Allatotropin (122 aa).

Residues Met-1–Gly-23 form the signal peptide. Positions Arg-24–Arg-40 are excised as a propeptide. At Phe-53 the chain carries Phenylalanine amide. The propeptide occupies Glu-57–Ala-122.

As to expression, expressed in brain and ventral ganglia but not in the retrocerebral complex (at protein level).

It localises to the secreted. In terms of biological role, neuropeptide stimulator of juvenile hormone synthesis. In Camponotus floridanus (Florida carpenter ant), this protein is Allatotropin.